A 184-amino-acid chain; its full sequence is Casparian strip membrane protein 3 (184 aa).

At 1-24 (MEGSEEHGETSKAPLSRGVSKGVS) the chain is on the cytoplasmic side. A helical transmembrane segment spans residues 25 to 45 (ILDVILRFVAIIGTLASAIAM). Topologically, residues 46–72 (GTTNQTLPFFTQFIRFKAQYSDLPTLT) are extracellular. Residue N49 is glycosylated (N-linked (GlcNAc...) asparagine). The chain crosses the membrane as a helical span at residues 73-93 (FFVVANSIVSAYLILSLPLSI). Topologically, residues 94-105 (VHVIRSRAKYSR) are cytoplasmic. A helical membrane pass occupies residues 106-126 (LILIFFDAAMLALVTAGASAA). Over 127 to 159 (AAIVYLAHKGNARANWLAICQQFDSFCERISGS) the chain is Extracellular. Residues 160-180 (LIGSFAAMVVLVLLIFLSAIA) traverse the membrane as a helical segment. Residues 181–184 (LARR) lie on the Cytoplasmic side of the membrane.

The protein belongs to the Casparian strip membrane proteins (CASP) family. As to quaternary structure, homodimer and heterodimers.

The protein localises to the cell membrane. In terms of biological role, regulates membrane-cell wall junctions and localized cell wall deposition. Required for establishment of the Casparian strip membrane domain (CSD) and the subsequent formation of Casparian strips, a cell wall modification of the root endodermis that determines an apoplastic barrier between the intraorganismal apoplasm and the extraorganismal apoplasm and prevents lateral diffusion. In Oryza sativa subsp. indica (Rice), this protein is Casparian strip membrane protein 3.